The sequence spans 412 residues: Multifunctional CCA protein (412 aa).

2 residues coordinate ATP: glycine 8 and arginine 11. The CTP site is built by glycine 8 and arginine 11. Residues aspartate 21 and aspartate 23 each contribute to the Mg(2+) site. ATP is bound by residues arginine 91, arginine 137, and arginine 140. Residues arginine 91, arginine 137, and arginine 140 each coordinate CTP. Residues 228–329 (TGIHTLMTLS…VKLFDSIDAW (102 aa)) form the HD domain.

Belongs to the tRNA nucleotidyltransferase/poly(A) polymerase family. Bacterial CCA-adding enzyme type 1 subfamily. As to quaternary structure, monomer. Can also form homodimers and oligomers. The cofactor is Mg(2+). It depends on Ni(2+) as a cofactor.

It catalyses the reaction a tRNA precursor + 2 CTP + ATP = a tRNA with a 3' CCA end + 3 diphosphate. It carries out the reaction a tRNA with a 3' CCA end + 2 CTP + ATP = a tRNA with a 3' CCACCA end + 3 diphosphate. Catalyzes the addition and repair of the essential 3'-terminal CCA sequence in tRNAs without using a nucleic acid template. Adds these three nucleotides in the order of C, C, and A to the tRNA nucleotide-73, using CTP and ATP as substrates and producing inorganic pyrophosphate. tRNA 3'-terminal CCA addition is required both for tRNA processing and repair. Also involved in tRNA surveillance by mediating tandem CCA addition to generate a CCACCA at the 3' terminus of unstable tRNAs. While stable tRNAs receive only 3'-terminal CCA, unstable tRNAs are marked with CCACCA and rapidly degraded. This Escherichia coli O6:H1 (strain CFT073 / ATCC 700928 / UPEC) protein is Multifunctional CCA protein.